Here is a 361-residue protein sequence, read N- to C-terminus: S-adenosylmethionine:tRNA ribosyltransferase-isomerase (361 aa).

Belongs to the QueA family. As to quaternary structure, monomer.

It is found in the cytoplasm. The enzyme catalyses 7-aminomethyl-7-carbaguanosine(34) in tRNA + S-adenosyl-L-methionine = epoxyqueuosine(34) in tRNA + adenine + L-methionine + 2 H(+). The protein operates within tRNA modification; tRNA-queuosine biosynthesis. Its function is as follows. Transfers and isomerizes the ribose moiety from AdoMet to the 7-aminomethyl group of 7-deazaguanine (preQ1-tRNA) to give epoxyqueuosine (oQ-tRNA). The protein is S-adenosylmethionine:tRNA ribosyltransferase-isomerase of Glaesserella parasuis serovar 5 (strain SH0165) (Haemophilus parasuis).